Consider the following 1464-residue polypeptide: Gag-Pol polyprotein (1464 aa).

G2 carries the N-myristoyl glycine; by host lipid modification. The interaction with Gp41 stretch occupies residues 7–31 (VLSGKKTDELEKVRLRPGGKKRYML). Positions 16–22 (LEKVRLR) match the Nuclear export signal motif. Positions 26 to 32 (KKRYMLK) match the Nuclear localization signal motif. Y130 is subject to Phosphotyrosine; by host. An interaction with human PPIA/CYPA and NUP153 region spans residues 186 to 223 (NCVGEHQAAMQIIREIINEEAADWDQQHPSPGPMPAGQ). Residues 274–360 (YNPTNILDIK…GGPGQKARLM (87 aa)) are dimerization/Multimerization of capsid protein p24. 2 CCHC-type zinc fingers span residues 387 to 404 (VTCWNCGKAGHTARQCKA) and 408 to 425 (QGCWKCGQQGHIMSKCPE). Basic and acidic residues predominate over residues 483–499 (AKELHATREEAEGEQRE). Positions 483 to 504 (AKELHATREEAEGEQRETLQGG) are disordered. The segment at 511–515 (PQFSL) is dimerization of protease. In terms of domain architecture, Peptidase A2 spans 531-600 (EVLLDTGADD…PINIFGRNIL (70 aa)). The active-site For protease activity; shared with dimeric partner is D535. Dimerization of protease regions lie at residues 559–565 (GIGGFIN) and 598–610 (NILNSLGMTLNFP). The 191-residue stretch at 654 to 844 (GQLEEAPPTN…PFKWMGYELW (191 aa)) folds into the Reverse transcriptase domain. Mg(2+)-binding residues include D719, D794, and D795. The tract at residues 836 to 844 (FKWMGYELW) is RT 'primer grip'. The Tryptophan repeat motif motif lies at 1006 to 1022 (WDQWWTDYWQVTWIPEW). The RNase H type-1 domain maps to 1042–1165 (LEGVETYYTD…VDHLVSQGIR (124 aa)). Residues D1051, E1086, D1106, and D1157 each contribute to the Mg(2+) site. Residues 1171 to 1212 (EKIEPAQEEHEKYHNNVKELVHKFGIPQLVARQIVNSCDKCQ) form an Integrase-type zinc finger. Zn(2+) contacts are provided by H1180, H1184, C1208, and C1211. One can recognise an Integrase catalytic domain in the interval 1222–1373 (VNSELGTWQM…PAERIVNMIT (152 aa)). The Mg(2+) site is built by D1232, D1284, and E1320. Positions 1391-1438 (FRVYYREGRDQLWKGPGDLLWKGEGAVIIKVGTEIKVIPRRKAKIIRN) form a DNA-binding region, integrase-type.

As to quaternary structure, homotrimer; further assembles as hexamers of trimers. Interacts with gp41 (via C-terminus). Interacts with host CALM1; this interaction induces a conformational change in the Matrix protein, triggering exposure of the myristate group. Interacts with host AP3D1; this interaction allows the polyprotein trafficking to multivesicular bodies during virus assembly. Part of the pre-integration complex (PIC) which is composed of viral genome, matrix protein, Vpr and integrase. Homodimer; the homodimer further multimerizes as homohexamers or homopentamers. Interacts with human PPIA/CYPA. Interacts with human NUP153. Interacts with host PDZD8; this interaction stabilizes the capsid. Interacts with monkey TRIM5; this interaction destabilizes the capsid. In terms of assembly, homodimer, whose active site consists of two apposed aspartic acid residues. As to quaternary structure, heterodimer of p66 RT and p51 RT (RT p66/p51). Heterodimerization of RT is essential for DNA polymerase activity. The overall folding of the subdomains is similar in p66 RT and p51 RT but the spatial arrangements of the subdomains are dramatically different. Homotetramer; may further associate as a homohexadecamer. Part of the pre-integration complex (PIC) which is composed of viral genome, matrix protein, Vpr and integrase. Interacts with human SMARCB1/INI1 and human PSIP1/LEDGF isoform 1. Interacts with human KPNA3; this interaction might play a role in nuclear import of the pre-integration complex. Interacts with human NUP153; this interaction might play a role in nuclear import of the pre-integration complex. Requires Mg(2+) as cofactor. Specific enzymatic cleavages by the viral protease yield mature proteins. The protease is released by autocatalytic cleavage. The polyprotein is cleaved during and after budding, this process is termed maturation. Proteolytic cleavage of p66 RT removes the RNase H domain to yield the p51 RT subunit. Nucleocapsid protein p7 might be further cleaved after virus entry.

The protein localises to the host cell membrane. It localises to the host endosome. The protein resides in the host multivesicular body. It is found in the virion membrane. Its subcellular location is the host nucleus. The protein localises to the host cytoplasm. It localises to the virion. The enzyme catalyses Endopeptidase for which the P1 residue is preferably hydrophobic.. It catalyses the reaction Endohydrolysis of RNA in RNA/DNA hybrids. Three different cleavage modes: 1. sequence-specific internal cleavage of RNA. Human immunodeficiency virus type 1 and Moloney murine leukemia virus enzymes prefer to cleave the RNA strand one nucleotide away from the RNA-DNA junction. 2. RNA 5'-end directed cleavage 13-19 nucleotides from the RNA end. 3. DNA 3'-end directed cleavage 15-20 nucleotides away from the primer terminus.. The catalysed reaction is 3'-end directed exonucleolytic cleavage of viral RNA-DNA hybrid.. It carries out the reaction DNA(n) + a 2'-deoxyribonucleoside 5'-triphosphate = DNA(n+1) + diphosphate. With respect to regulation, protease: The viral protease is inhibited by many synthetic protease inhibitors (PIs), such as amprenavir, atazanavir, indinavir, loprinavir, nelfinavir, ritonavir and saquinavir. Use of protease inhibitors in tritherapy regimens permit more ambitious therapeutic strategies. Reverse transcriptase/ribonuclease H: RT can be inhibited either by nucleoside RT inhibitors (NRTIs) or by non nucleoside RT inhibitors (NNRTIs). NRTIs act as chain terminators, whereas NNRTIs inhibit DNA polymerization by binding a small hydrophobic pocket near the RT active site and inducing an allosteric change in this region. Classical NRTIs are abacavir, adefovir (PMEA), didanosine (ddI), lamivudine (3TC), stavudine (d4T), tenofovir (PMPA), zalcitabine (ddC), and zidovudine (AZT). Classical NNRTIs are atevirdine (BHAP U-87201E), delavirdine, efavirenz (DMP-266), emivirine (I-EBU), and nevirapine (BI-RG-587). The tritherapies used as a basic effective treatment of AIDS associate two NRTIs and one NNRTI. Its function is as follows. Mediates, with Gag polyprotein, the essential events in virion assembly, including binding the plasma membrane, making the protein-protein interactions necessary to create spherical particles, recruiting the viral Env proteins, and packaging the genomic RNA via direct interactions with the RNA packaging sequence (Psi). Gag-Pol polyprotein may regulate its own translation, by the binding genomic RNA in the 5'-UTR. At low concentration, the polyprotein would promote translation, whereas at high concentration, the polyprotein would encapsidate genomic RNA and then shut off translation. In terms of biological role, targets the polyprotein to the plasma membrane via a multipartite membrane-binding signal, that includes its myristoylated N-terminus. Matrix protein is part of the pre-integration complex. Implicated in the release from host cell mediated by Vpu. Binds to RNA. Forms the conical core that encapsulates the genomic RNA-nucleocapsid complex in the virion. Most core are conical, with only 7% tubular. The core is constituted by capsid protein hexamer subunits. The core is disassembled soon after virion entry. Host restriction factors such as TRIM5-alpha or TRIMCyp bind retroviral capsids and cause premature capsid disassembly, leading to blocks in reverse transcription. Capsid restriction by TRIM5 is one of the factors which restricts HIV-1 to the human species. Host PIN1 apparently facilitates the virion uncoating. On the other hand, interactions with PDZD8 or CYPA stabilize the capsid. Functionally, encapsulates and protects viral dimeric unspliced genomic RNA (gRNA). Binds these RNAs through its zinc fingers. Acts as a nucleic acid chaperone which is involved in rearangement of nucleic acid secondary structure during gRNA retrotranscription. Also facilitates template switch leading to recombination. As part of the polyprotein, participates in gRNA dimerization, packaging, tRNA incorporation and virion assembly. Its function is as follows. Aspartyl protease that mediates proteolytic cleavages of Gag and Gag-Pol polyproteins during or shortly after the release of the virion from the plasma membrane. Cleavages take place as an ordered, step-wise cascade to yield mature proteins. This process is called maturation. Displays maximal activity during the budding process just prior to particle release from the cell. Also cleaves Nef and Vif, probably concomitantly with viral structural proteins on maturation of virus particles. Hydrolyzes host EIF4GI and PABP1 in order to shut off the capped cellular mRNA translation. The resulting inhibition of cellular protein synthesis serves to ensure maximal viral gene expression and to evade host immune response. In terms of biological role, multifunctional enzyme that converts the viral RNA genome into dsDNA in the cytoplasm, shortly after virus entry into the cell. This enzyme displays a DNA polymerase activity that can copy either DNA or RNA templates, and a ribonuclease H (RNase H) activity that cleaves the RNA strand of RNA-DNA heteroduplexes in a partially processive 3' to 5' endonucleasic mode. Conversion of viral genomic RNA into dsDNA requires many steps. A tRNA(3)-Lys binds to the primer-binding site (PBS) situated at the 5'-end of the viral RNA. RT uses the 3' end of the tRNA primer to perform a short round of RNA-dependent minus-strand DNA synthesis. The reading proceeds through the U5 region and ends after the repeated (R) region which is present at both ends of viral RNA. The portion of the RNA-DNA heteroduplex is digested by the RNase H, resulting in a ssDNA product attached to the tRNA primer. This ssDNA/tRNA hybridizes with the identical R region situated at the 3' end of viral RNA. This template exchange, known as minus-strand DNA strong stop transfer, can be either intra- or intermolecular. RT uses the 3' end of this newly synthesized short ssDNA to perform the RNA-dependent minus-strand DNA synthesis of the whole template. RNase H digests the RNA template except for two polypurine tracts (PPTs) situated at the 5'-end and near the center of the genome. It is not clear if both polymerase and RNase H activities are simultaneous. RNase H probably can proceed both in a polymerase-dependent (RNA cut into small fragments by the same RT performing DNA synthesis) and a polymerase-independent mode (cleavage of remaining RNA fragments by free RTs). Secondly, RT performs DNA-directed plus-strand DNA synthesis using the PPTs that have not been removed by RNase H as primers. PPTs and tRNA primers are then removed by RNase H. The 3' and 5' ssDNA PBS regions hybridize to form a circular dsDNA intermediate. Strand displacement synthesis by RT to the PBS and PPT ends produces a blunt ended, linear dsDNA copy of the viral genome that includes long terminal repeats (LTRs) at both ends. Catalyzes viral DNA integration into the host chromosome, by performing a series of DNA cutting and joining reactions. This enzyme activity takes place after virion entry into a cell and reverse transcription of the RNA genome in dsDNA. The first step in the integration process is 3' processing. This step requires a complex comprising the viral genome, matrix protein, Vpr and integrase. This complex is called the pre-integration complex (PIC). The integrase protein removes 2 nucleotides from each 3' end of the viral DNA, leaving recessed CA OH's at the 3' ends. In the second step, the PIC enters cell nucleus. This process is mediated through integrase and Vpr proteins, and allows the virus to infect a non dividing cell. This ability to enter the nucleus is specific of lentiviruses, other retroviruses cannot and rely on cell division to access cell chromosomes. In the third step, termed strand transfer, the integrase protein joins the previously processed 3' ends to the 5' ends of strands of target cellular DNA at the site of integration. The 5'-ends are produced by integrase-catalyzed staggered cuts, 5 bp apart. A Y-shaped, gapped, recombination intermediate results, with the 5'-ends of the viral DNA strands and the 3' ends of target DNA strands remaining unjoined, flanking a gap of 5 bp. The last step is viral DNA integration into host chromosome. This involves host DNA repair synthesis in which the 5 bp gaps between the unjoined strands are filled in and then ligated. Since this process occurs at both cuts flanking the HIV genome, a 5 bp duplication of host DNA is produced at the ends of HIV-1 integration. Alternatively, Integrase may catalyze the excision of viral DNA just after strand transfer, this is termed disintegration. The sequence is that of Gag-Pol polyprotein (gag-pol) from Human immunodeficiency virus type 2 subtype B (isolate EHO) (HIV-2).